Consider the following 430-residue polypeptide: Adenylosuccinate synthetase (430 aa).

GTP contacts are provided by residues 12 to 18 (GDEGKGK) and 40 to 42 (GHT). Residue aspartate 13 is the Proton acceptor of the active site. Positions 13 and 40 each coordinate Mg(2+). IMP is bound by residues 13 to 16 (DEGK), 38 to 41 (NAGH), threonine 128, arginine 142, glutamine 223, threonine 238, and arginine 302. Histidine 41 (proton donor) is an active-site residue. Residue 298 to 304 (TTTGRPR) participates in substrate binding. Residues arginine 304, 330-332 (SID), and 412-414 (SVG) contribute to the GTP site.

This sequence belongs to the adenylosuccinate synthetase family. As to quaternary structure, homodimer. The cofactor is Mg(2+).

Its subcellular location is the cytoplasm. It carries out the reaction IMP + L-aspartate + GTP = N(6)-(1,2-dicarboxyethyl)-AMP + GDP + phosphate + 2 H(+). It functions in the pathway purine metabolism; AMP biosynthesis via de novo pathway; AMP from IMP: step 1/2. Functionally, plays an important role in the de novo pathway of purine nucleotide biosynthesis. Catalyzes the first committed step in the biosynthesis of AMP from IMP. The sequence is that of Adenylosuccinate synthetase from Streptococcus equi subsp. equi (strain 4047).